A 331-amino-acid chain; its full sequence is (+)-aristolochene synthase TS1 (331 aa).

The segment at 1–22 (MTRMKNSSSNVTSASGSGSGSG) is disordered. Residues 7–16 (SSSNVTSASG) show a composition bias toward low complexity. Asp102, Asn231, Ser235, and Glu239 together coordinate Mg(2+). The short motif at 102-106 (DDLLE) is the DDxx(x)D/E motif element. Residues 231–239 (NDVYSYEKE) carry the NDxxSxxxD/E motif motif. Positions 326 and 327 each coordinate (2E,6E)-farnesyl diphosphate.

It belongs to the terpene synthase family. In terms of assembly, homodimer. The cofactor is Mg(2+).

The catalysed reaction is (2E,6E)-farnesyl diphosphate = (+)-aristolochene + diphosphate. The protein operates within sesquiterpene biosynthesis; aristolochene biosynthesis; aristolochene from farnesyl diphosphate: step 1/1. In terms of biological role, catalyzes the cyclization of trans,trans-farnesyl diphosphate (FPP) to the bicyclic sesquiterpene aristolochene. Aristolochene is the likely parent compound for a number of sesquiterpenoid toxins produced by filamentous fungi. This is (+)-aristolochene synthase TS1 from Penicillium expansum (Blue mold rot fungus).